The sequence spans 446 residues: Na(+)-translocating NADH-quinone reductase subunit A (446 aa).

Belongs to the NqrA family. As to quaternary structure, composed of six subunits; NqrA, NqrB, NqrC, NqrD, NqrE and NqrF.

It catalyses the reaction a ubiquinone + n Na(+)(in) + NADH + H(+) = a ubiquinol + n Na(+)(out) + NAD(+). NQR complex catalyzes the reduction of ubiquinone-1 to ubiquinol by two successive reactions, coupled with the transport of Na(+) ions from the cytoplasm to the periplasm. NqrA to NqrE are probably involved in the second step, the conversion of ubisemiquinone to ubiquinol. This Vibrio anguillarum (Listonella anguillarum) protein is Na(+)-translocating NADH-quinone reductase subunit A.